The primary structure comprises 589 residues: Aspartate--tRNA ligase (589 aa).

E172 serves as a coordination point for L-aspartate. Positions 196–199 (QLFK) are aspartate. Residue R218 participates in L-aspartate binding. ATP-binding positions include 218–220 (RDE) and Q227. H449 provides a ligand contact to L-aspartate. Residue E483 participates in ATP binding. Residue R490 participates in L-aspartate binding. Residue 535–538 (GLDR) participates in ATP binding.

The protein belongs to the class-II aminoacyl-tRNA synthetase family. Type 1 subfamily. In terms of assembly, homodimer.

The protein localises to the cytoplasm. It catalyses the reaction tRNA(Asp) + L-aspartate + ATP = L-aspartyl-tRNA(Asp) + AMP + diphosphate. Its function is as follows. Catalyzes the attachment of L-aspartate to tRNA(Asp) in a two-step reaction: L-aspartate is first activated by ATP to form Asp-AMP and then transferred to the acceptor end of tRNA(Asp). The protein is Aspartate--tRNA ligase of Haemophilus ducreyi (strain 35000HP / ATCC 700724).